Consider the following 264-residue polypeptide: 3-methyl-2-oxobutanoate hydroxymethyltransferase (264 aa).

Asp45 and Asp84 together coordinate Mg(2+). 3-methyl-2-oxobutanoate is bound by residues 45-46 (DS), Asp84, and Lys112. Mg(2+) is bound at residue Glu114. Glu181 functions as the Proton acceptor in the catalytic mechanism.

Belongs to the PanB family. In terms of assembly, homodecamer; pentamer of dimers. The cofactor is Mg(2+).

It is found in the cytoplasm. It catalyses the reaction 3-methyl-2-oxobutanoate + (6R)-5,10-methylene-5,6,7,8-tetrahydrofolate + H2O = 2-dehydropantoate + (6S)-5,6,7,8-tetrahydrofolate. Its pathway is cofactor biosynthesis; (R)-pantothenate biosynthesis; (R)-pantoate from 3-methyl-2-oxobutanoate: step 1/2. Functionally, catalyzes the reversible reaction in which hydroxymethyl group from 5,10-methylenetetrahydrofolate is transferred onto alpha-ketoisovalerate to form ketopantoate. The protein is 3-methyl-2-oxobutanoate hydroxymethyltransferase of Shewanella piezotolerans (strain WP3 / JCM 13877).